Here is a 429-residue protein sequence, read N- to C-terminus: Serum response factor-binding protein 1 (429 aa).

Residue Ala-2 is modified to N-acetylalanine. Coiled coils occupy residues 42–67 (KGTE…AMKE) and 108–144 (LLKK…EDNH). Polar residues-rich tracts occupy residues 128–138 (QNVTEVESSKN) and 146–160 (KNTL…NLQR). Disordered regions lie at residues 128–285 (QNVT…GDDF) and 311–429 (EKVF…TFDD). Residues 183–195 (NSKEKIAKMEHGP) are compositionally biased toward basic and acidic residues. Lys-190 is covalently cross-linked (Glycyl lysine isopeptide (Lys-Gly) (interchain with G-Cter in SUMO2)). 5 positions are modified to phosphoserine: Ser-203, Ser-205, Ser-264, Ser-279, and Ser-281. A compositionally biased stretch (acidic residues) spans 249–265 (GGEELCEEEKEYFDDST). Basic and acidic residues predominate over residues 311-341 (EKVFLKEDTGETHGDTRNDKTKPSTETRKLE). Lys-316 is covalently cross-linked (Glycyl lysine isopeptide (Lys-Gly) (interchain with G-Cter in SUMO2)). Phosphoserine is present on residues Ser-349, Ser-351, and Ser-367. The span at 357 to 367 (NFKEQAPKTRS) shows a compositional bias: basic and acidic residues. Residues 373 to 383 (NEPQFKNQFNK) show a composition bias toward polar residues.

Interacts with SRF. Forms complexes with SRF and SRF cofactors ARID2, MYOCD and NKX2-5. Interacts with the N-terminus of SLC2A4.

Its subcellular location is the cytoplasm. The protein localises to the perinuclear region. Functionally, may be involved in regulating transcriptional activation of cardiac genes during the aging process. May play a role in biosynthesis and/or processing of SLC2A4 in adipose cells. This is Serum response factor-binding protein 1 from Pongo abelii (Sumatran orangutan).